We begin with the raw amino-acid sequence, 216 residues long: Glycerol-3-phosphate acyltransferase (216 aa).

5 helical membrane passes run 11-31 (LVLG…FGLV), 62-82 (LALA…LVAS), 95-115 (VLAG…PIWL), 132-152 (ATAW…AALF), and 171-191 (LVLA…LAWI).

It belongs to the PlsY family. As to quaternary structure, probably interacts with PlsX.

Its subcellular location is the cell inner membrane. The enzyme catalyses an acyl phosphate + sn-glycerol 3-phosphate = a 1-acyl-sn-glycero-3-phosphate + phosphate. It functions in the pathway lipid metabolism; phospholipid metabolism. Its function is as follows. Catalyzes the transfer of an acyl group from acyl-phosphate (acyl-PO(4)) to glycerol-3-phosphate (G3P) to form lysophosphatidic acid (LPA). This enzyme utilizes acyl-phosphate as fatty acyl donor, but not acyl-CoA or acyl-ACP. The chain is Glycerol-3-phosphate acyltransferase from Rhodospirillum rubrum (strain ATCC 11170 / ATH 1.1.1 / DSM 467 / LMG 4362 / NCIMB 8255 / S1).